The following is a 290-amino-acid chain: Agmatinase (290 aa).

Mn(2+) is bound by residues histidine 112, aspartate 135, histidine 137, aspartate 139, aspartate 216, and aspartate 218.

The protein belongs to the arginase family. Agmatinase subfamily. Requires Mn(2+) as cofactor.

The enzyme catalyses agmatine + H2O = urea + putrescine. The protein operates within amine and polyamine biosynthesis; putrescine biosynthesis via agmatine pathway; putrescine from agmatine: step 1/1. Catalyzes the formation of putrescine from agmatine. This chain is Agmatinase (speB), found in Bacillus subtilis (strain 168).